The following is a 268-amino-acid chain: 1D-myo-inositol 2-acetamido-2-deoxy-alpha-D-glucopyranoside deacetylase (268 aa).

Residues His-7, Asp-10, and His-142 each contribute to the Zn(2+) site.

Belongs to the MshB deacetylase family. Zn(2+) serves as cofactor.

The catalysed reaction is 1D-myo-inositol 2-acetamido-2-deoxy-alpha-D-glucopyranoside + H2O = 1D-myo-inositol 2-amino-2-deoxy-alpha-D-glucopyranoside + acetate. Functionally, catalyzes the deacetylation of 1D-myo-inositol 2-acetamido-2-deoxy-alpha-D-glucopyranoside (GlcNAc-Ins) in the mycothiol biosynthesis pathway. The protein is 1D-myo-inositol 2-acetamido-2-deoxy-alpha-D-glucopyranoside deacetylase of Saccharomonospora viridis (strain ATCC 15386 / DSM 43017 / JCM 3036 / CCUG 5913 / NBRC 12207 / NCIMB 9602 / P101) (Thermoactinomyces viridis).